Consider the following 306-residue polypeptide: MKQRTLANPIKAKGVGLHTGHKSIMTLRPAPVNTGIVFRRIDQTPIVEFPVSPELVKETMLCTTIVQEQDNQKIKIATIEHLMSALAGVGIDNLYIDITADEVPIMDGSASHFIFLLQSAGIQLQEASKKFIRIKKQVKVQNEKGGVAEFSPYEGFRLNFSIEFDHPAFDQTAEKMTLSFSSTAYFKEVSRARTFGFMKDMEKLRAQNLGLGAGLHNAIGLDENGVVNQEGLRDKDEFVRHKILDAVGDLYMAGHPIIGEFTAHKSGHALNNQLLRALVADPEAYEVVTYDDEEPPIQYGSSKILV.

Positions 81, 241, and 245 each coordinate Zn(2+). H268 serves as the catalytic Proton donor.

Belongs to the LpxC family. Zn(2+) serves as cofactor.

The enzyme catalyses a UDP-3-O-[(3R)-3-hydroxyacyl]-N-acetyl-alpha-D-glucosamine + H2O = a UDP-3-O-[(3R)-3-hydroxyacyl]-alpha-D-glucosamine + acetate. It functions in the pathway glycolipid biosynthesis; lipid IV(A) biosynthesis; lipid IV(A) from (3R)-3-hydroxytetradecanoyl-[acyl-carrier-protein] and UDP-N-acetyl-alpha-D-glucosamine: step 2/6. Catalyzes the hydrolysis of UDP-3-O-myristoyl-N-acetylglucosamine to form UDP-3-O-myristoylglucosamine and acetate, the committed step in lipid A biosynthesis. This is UDP-3-O-acyl-N-acetylglucosamine deacetylase from Hydrogenovibrio crunogenus (strain DSM 25203 / XCL-2) (Thiomicrospira crunogena).